A 210-amino-acid chain; its full sequence is Outer-membrane lipoprotein carrier protein (210 aa).

Residues methionine 1–alanine 26 form the signal peptide.

It belongs to the LolA family. As to quaternary structure, monomer.

It localises to the periplasm. Functionally, participates in the translocation of lipoproteins from the inner membrane to the outer membrane. Only forms a complex with a lipoprotein if the residue after the N-terminal Cys is not an aspartate (The Asp acts as a targeting signal to indicate that the lipoprotein should stay in the inner membrane). The chain is Outer-membrane lipoprotein carrier protein from Bordetella pertussis (strain Tohama I / ATCC BAA-589 / NCTC 13251).